Consider the following 309-residue polypeptide: MNRKPGLHPRNRHHSRYDFDALTESCPALGAFVRPSPAGEPTIDFADPQAVKTLNQALLAHFYGVREWDIPDGFLCPPVPGRADYIHHLADLLAEGNGGALPAQASVLDIGVGANCIYPLIGQHEYGWRFTGTDTSDEAIRSASAIIDANPGLNRAIRLRRQKSPGAIFNGIIHKNESYDATLCNPPFHDSADAAEAGNARKRRNLGLAADSGLNFGGQQQELWCEGGEVGFITQMIAESKLFARQVLWFTTLVSKGDNLPLLYRALEQAGAVKVVKKEMAQGQKQSRFIAWSFLDTAQRERWAQNRLR.

The protein belongs to the methyltransferase superfamily. METTL16/RlmF family.

It localises to the cytoplasm. The enzyme catalyses adenosine(1618) in 23S rRNA + S-adenosyl-L-methionine = N(6)-methyladenosine(1618) in 23S rRNA + S-adenosyl-L-homocysteine + H(+). In terms of biological role, specifically methylates the adenine in position 1618 of 23S rRNA. In Cronobacter sakazakii (strain ATCC BAA-894) (Enterobacter sakazakii), this protein is Ribosomal RNA large subunit methyltransferase F.